Consider the following 372-residue polypeptide: Beta-1,3-N-acetylglucosaminyltransferase radical fringe (372 aa).

Residues 1-10 lie on the Cytoplasmic side of the membrane; sequence MNSSCLGLRR. The helical; Signal-anchor for type II membrane protein transmembrane segment at 11 to 27 threads the bilayer; sequence TCFLLSVTAAAVLLLLL. Over 28-372 the chain is Lumenal; the sequence is PRGQPPAAPR…TIWCPNKKMS (345 aa). Over residues 30–48 the composition is skewed to pro residues; sequence GQPPAAPRRRPPPAGPSRP. Residues 30–96 are disordered; it reads GQPPAAPRRR…RVRMGPPGGS (67 aa). The segment covering 64 to 78 has biased composition (gly residues); the sequence is DRGGGSGAAGGGRGV. Residue arginine 120 coordinates substrate. A glycan (N-linked (GlcNAc...) asparagine) is linked at asparagine 159. Disulfide bonds link cysteine 160/cysteine 171 and cysteine 189/cysteine 253. Residue aspartate 193 coordinates substrate. A Mn(2+)-binding site is contributed by aspartate 194. Residue aspartate 283 is part of the active site. Histidine 307 contributes to the Mn(2+) binding site. Cysteine 357 and cysteine 366 form a disulfide bridge.

This sequence belongs to the glycosyltransferase 31 family. Mn(2+) serves as cofactor.

It localises to the golgi apparatus membrane. The catalysed reaction is 3-O-(alpha-L-fucosyl)-L-threonyl-[EGF-like domain protein] + UDP-N-acetyl-alpha-D-glucosamine = 3-O-(N-acetyl-beta-D-glucosaminyl-(1-&gt;3)-alpha-L-fucosyl)-L-threonyl-[EGF-like domain protein] + UDP + H(+). It catalyses the reaction 3-O-(alpha-L-fucosyl)-L-seryl-[EGF-like domain protein] + UDP-N-acetyl-alpha-D-glucosamine = 3-O-(N-acetyl-beta-D-glucosaminyl-(1-&gt;3)-alpha-L-fucosyl)-L-seryl-[EGF-like domain protein] + UDP + H(+). Its function is as follows. Glycosyltransferase that initiates the elongation of O-linked fucose residues attached to EGF-like repeats in the extracellular domain of Notch molecules. Plays an important role in limb outgrowth, it directs the formation and positioning of the apical ectodermal ridge (AER), one of the key organizer centers of vertebrate limb development. This chain is Beta-1,3-N-acetylglucosaminyltransferase radical fringe (RFNG), found in Gallus gallus (Chicken).